The following is a 259-amino-acid chain: 4-hydroxy-tetrahydrodipicolinate reductase (259 aa).

NAD(+)-binding positions include Gly-9 to Met-14 and Glu-35. An NADP(+)-binding site is contributed by Arg-36. NAD(+) is bound by residues Gly-92–Thr-94 and Ala-116–Met-119. Catalysis depends on His-149, which acts as the Proton donor/acceptor. His-150 provides a ligand contact to (S)-2,3,4,5-tetrahydrodipicolinate. Lys-153 (proton donor) is an active-site residue. Residue Gly-159–Thr-160 coordinates (S)-2,3,4,5-tetrahydrodipicolinate.

The protein belongs to the DapB family.

It is found in the cytoplasm. It carries out the reaction (S)-2,3,4,5-tetrahydrodipicolinate + NAD(+) + H2O = (2S,4S)-4-hydroxy-2,3,4,5-tetrahydrodipicolinate + NADH + H(+). The catalysed reaction is (S)-2,3,4,5-tetrahydrodipicolinate + NADP(+) + H2O = (2S,4S)-4-hydroxy-2,3,4,5-tetrahydrodipicolinate + NADPH + H(+). Its pathway is amino-acid biosynthesis; L-lysine biosynthesis via DAP pathway; (S)-tetrahydrodipicolinate from L-aspartate: step 4/4. Its function is as follows. Catalyzes the conversion of 4-hydroxy-tetrahydrodipicolinate (HTPA) to tetrahydrodipicolinate. The protein is 4-hydroxy-tetrahydrodipicolinate reductase of Oleidesulfovibrio alaskensis (strain ATCC BAA-1058 / DSM 17464 / G20) (Desulfovibrio alaskensis).